Reading from the N-terminus, the 404-residue chain is Argininosuccinate synthase (404 aa).

ATP-binding positions include 12–20 (AYSGGLDTS) and Ala39. Positions 91 and 96 each coordinate L-citrulline. Gly121 contacts ATP. Residues Thr123, Asn127, and Asp128 each contribute to the L-aspartate site. Asn127 is a binding site for L-citrulline. Positions 131, 180, 189, 265, and 277 each coordinate L-citrulline.

This sequence belongs to the argininosuccinate synthase family. Type 1 subfamily. In terms of assembly, homotetramer.

The protein localises to the cytoplasm. It catalyses the reaction L-citrulline + L-aspartate + ATP = 2-(N(omega)-L-arginino)succinate + AMP + diphosphate + H(+). It functions in the pathway amino-acid biosynthesis; L-arginine biosynthesis; L-arginine from L-ornithine and carbamoyl phosphate: step 2/3. In Vibrio campbellii (strain ATCC BAA-1116), this protein is Argininosuccinate synthase.